A 1252-amino-acid chain; its full sequence is Myosin-3 (1252 aa).

The 680-residue stretch at 36 to 715 folds into the Myosin motor domain; it reads VGVSDLTLLS…TLFALENMRD (680 aa). 129 to 136 contacts ATP; it reads GESGAGKT. Position 357 is a phosphoserine (serine 357). The actin-binding stretch occupies residues 404-486; that stretch reads SIGILDIYGF…PGIFAAMNDA (83 aa). IQ domains follow at residues 719–739 and 740–767; these read YNMAARIQRAWRRYLQKRIDA and AIRIQNAIRGKSGVSTFRNDELRNAGDK. Residues 773 to 963 enclose the TH1 domain; the sequence is KERRNMSLLG…TILVRHGNPP (191 aa). Disordered regions lie at residues 988-1086, 1106-1136, and 1203-1252; these read KTMK…KTSV, YSLPENIPQSSQTDSYQAAYDFPGSGNPSEL, and INEP…DDDW. The segment covering 997 to 1016 has biased composition (low complexity); it reads KRTPQALPTSSLAASAAQAA. 3 stretches are compositionally biased toward polar residues: residues 1050–1063, 1106–1121, and 1203–1219; these read PVRNTSKTISNSKV, YSLPENIPQSSQTDSY, and INEPETHTNQGPSNTDL. One can recognise an SH3 domain in the interval 1116 to 1178; the sequence is SQTDSYQAAY…PTSYIVKYNG (63 aa). Residues 1238 to 1252 show a composition bias toward acidic residues; the sequence is SEEDISREEDDDDDW.

It belongs to the TRAFAC class myosin-kinesin ATPase superfamily. Myosin family. Post-translationally, phosphorylation of the TEDS site (Ser-357) is required for the polarization of the actin cytoskeleton. Phosphorylation probably activates the myosin-I ATPase activity.

It is found in the cytoplasm. It localises to the cytoskeleton. The protein localises to the actin patch. Functionally, type-I myosin implicated in the organization of the actin cytoskeleton. Required for proper actin cytoskeleton polarization. At the cell cortex, assembles in patch-like structures together with proteins from the actin-polymerizing machinery and promotes actin assembly. Functions as actin nucleation-promoting factor (NPF) for the Arp2/3 complex. This is Myosin-3 (MYO3) from Candida glabrata (strain ATCC 2001 / BCRC 20586 / JCM 3761 / NBRC 0622 / NRRL Y-65 / CBS 138) (Yeast).